A 169-amino-acid chain; its full sequence is Transmembrane protein B169L (169 aa).

2 helical membrane-spanning segments follow: residues 28–48 (NPFIVALIITAVVLVVFFAIC) and 60–80 (TAIYVYICIVALLFLHYYVLN). N-linked (GlcNAc...) asparagine; by host glycosylation occurs at Asn88. The segment at 107 to 169 (DEIIPPISPP…EVIMPSQYNN (63 aa)) is disordered. Low complexity predominate over residues 144-154 (SKPASSADSKP).

This sequence belongs to the asfivirus B169L family.

It localises to the host membrane. Its subcellular location is the virion. This is Transmembrane protein B169L from Ornithodoros (relapsing fever ticks).